Here is a 475-residue protein sequence, read N- to C-terminus: Ataxin-10 (475 aa).

Omega-N-methylarginine is present on Arg-10. 2 positions are modified to phosphoserine: Ser-12 and Ser-77. Thr-82 carries the post-translational modification Phosphothreonine. Ser-430 is subject to Phosphoserine.

This sequence belongs to the ataxin-10 family. Homooligomer. Interacts with GNB2. Interacts with IQCB1. Interacts with OGT. In terms of processing, polyubiquitinated. Phosphorylation at Ser-12 by AURKB promotes the association of ATXN10 with PLK1. Phosphorylation at Ser-77 and Thr-82 by PLK1 may play a role in the regulation of cytokinesis and may stimulate the proteasome-mediated degradation of ATXN10.

Its subcellular location is the cytoplasm. It is found in the perinuclear region. The protein localises to the midbody. The protein resides in the cytoskeleton. It localises to the cilium basal body. Its subcellular location is the microtubule organizing center. It is found in the centrosome. The protein localises to the centriole. In terms of biological role, may play a role in the regulation of cytokinesis. May play a role in signaling by stimulating protein glycosylation. Induces neuritogenesis by activating the Ras-MAP kinase pathway and is necessary for the survival of cerebellar neurons. Does not appear to play a major role in ciliogenesis. The polypeptide is Ataxin-10 (ATXN10) (Macaca fascicularis (Crab-eating macaque)).